The primary structure comprises 142 residues: Large ribosomal subunit protein uL11 (142 aa).

This sequence belongs to the universal ribosomal protein uL11 family. In terms of assembly, part of the ribosomal stalk of the 50S ribosomal subunit. Interacts with L10 and the large rRNA to form the base of the stalk. L10 forms an elongated spine to which L12 dimers bind in a sequential fashion forming a multimeric L10(L12)X complex. Post-translationally, one or more lysine residues are methylated.

Forms part of the ribosomal stalk which helps the ribosome interact with GTP-bound translation factors. This Bartonella henselae (strain ATCC 49882 / DSM 28221 / CCUG 30454 / Houston 1) (Rochalimaea henselae) protein is Large ribosomal subunit protein uL11.